A 347-amino-acid polypeptide reads, in one-letter code: uncharacterized protein (347 aa).

The protein localises to the cytoplasm. It localises to the nucleus. This is an uncharacterized protein from Schizosaccharomyces pombe (strain 972 / ATCC 24843) (Fission yeast).